The primary structure comprises 681 residues: Anaphase-promoting complex subunit 2 (681 aa).

Belongs to the cullin family. In terms of assembly, the APC/C is composed of at least 13 subunits: apc1, apc2, nuc2, apc4, apc5, cut9, apc8, apc10, apc11, hcn1, apc13, apc14 and apc15.

In terms of biological role, component of the anaphase-promoting complex/cyclosome (APC/C), a cell cycle-regulated E3 ubiquitin-protein ligase complex that controls progression through mitosis and the G1 phase of the cell cycle. The APC/C is thought to confer substrate specificity and, in the presence of ubiquitin-conjugating E2 enzymes, it catalyzes the formation of protein-ubiquitin conjugates that are subsequently degraded by the 26S proteasome. The sequence is that of Anaphase-promoting complex subunit 2 (apc2) from Schizosaccharomyces pombe (strain 972 / ATCC 24843) (Fission yeast).